A 239-amino-acid polypeptide reads, in one-letter code: Calcium load-activated calcium channel (239 aa).

Residues 1–55 lie on the Lumenal side of the membrane; it reads MPRKRKCDLRAVRVGLLLGGGGVYGSRFRFTFPGCRALSPWRVRVQRRRCEMSTM. The helical transmembrane segment at 56–83 threads the bilayer; sequence FADTLLIVFISVCTALLAEGITWVLVYR. Residues 83–140 adopt a coiled-coil conformation; the sequence is RTDKYKRLKAEVEKQSKKLEKKKETITESAGRQQKKKIERQEEKLKNNNRDLSMVRMK. The Cytoplasmic portion of the chain corresponds to 84–137; the sequence is TDKYKRLKAEVEKQSKKLEKKKETITESAGRQQKKKIERQEEKLKNNNRDLSMV. Phosphoserine is present on serine 111. Residues 138–157 traverse the membrane as a helical segment; sequence RMKSMFAIGFCFTALMGMFN. Over 158 to 171 the chain is Lumenal; it reads SIFDGRVVAKLPFT. The stretch at 172–181 is an intramembrane region; that stretch reads PLSYIQGLSH. At 182–191 the chain is on the lumenal side; it reads RNLLGDDTTD. The chain crosses the membrane as a helical span at residues 192–213; sequence CSFIFLYILCTMSIRQNIQKIL. The Cytoplasmic segment spans residues 214–239; sequence GLAPSRAATKQAGGFLGPPPPSGKFS. Serine 239 is subject to Phosphoserine.

It belongs to the TMCO1 family. Homodimer and homotetramer. Homodimer under resting conditions; forms homotetramers following ER calcium overload. Component of the GET- and EMC-like (GEL) complex, composed of RAB5IF/OPTI and TMCO1. The GEL complex is part of the multi-pass translocon (MPT) complex, composed of three subcomplexes, the GEL complex (composed of RAB5IF/OPTI and TMCO1), the BOS complex (composed of NCLN/Nicalin, NOMO and TMEM147) and the PAT complex (composed of WDR83OS/Asterix and CCDC47). The MPT complex associates with the SEC61 complex. Widely expressed in adult and fetal tissues, with higher levels in thymus, prostate, testis and small intestine and lower levels in brain, placenta, lung and kidney. Present in most tissues in the eye, including the trabecular meshwork and retina (at protein level).

It localises to the endoplasmic reticulum membrane. It is found in the golgi apparatus membrane. The protein resides in the mitochondrion membrane. The enzyme catalyses Ca(2+)(in) = Ca(2+)(out). In terms of biological role, endoplasmic reticulum (ER) calcium-selective channel preventing intracellular Ca2(+) stores from overfilling and maintaining calcium homeostasis in the ER. In response to endoplasmic reticulum (ER) Ca2(+) overloading, assembles into a homotetramer, forming a functional calcium-selective channel facilitating Ca2(+) release. Mediates ER Ca2(+) homeostasis in osteoblasts and plays a key role in bone formation, via the CaMKII-HDAC4-RUNX2 signaling axis. Component of the multi-pass translocon (MPT) complex that mediates insertion of multi-pass membrane proteins into the lipid bilayer of membranes. The MPT complex takes over after the SEC61 complex: following membrane insertion of the first few transmembrane segments of proteins by the SEC61 complex, the MPT complex occludes the lateral gate of the SEC61 complex to promote insertion of subsequent transmembrane regions. Within the MPT complex, the GEL subcomplex may mediate insertion of transmembrane regions into the membrane. This is Calcium load-activated calcium channel from Homo sapiens (Human).